The sequence spans 170 residues: Heat shock protein beta-7 (170 aa).

Residues 1–39 (MSHRTSSTFRAERSFHSSSSSSSSSTSSSASRALPAQDP) are disordered. Residues 1-71 (MSHRTSSTFR…PLAFPARPGG (71 aa)) are required for localization to SC35 splicing speckles. Over residues 16–31 (HSSSSSSSSSTSSSAS) the composition is skewed to low complexity. Residues 62-170 (PLAFPARPGG…QQTFRTEIKI (109 aa)) form the sHSP domain.

It belongs to the small heat shock protein (HSP20) family. As to quaternary structure, interacts with C-terminal domain of actin-binding protein 280. In terms of tissue distribution, isoform 1 is highly expressed in adult and fetal heart, skeletal muscle, and at a much lower levels in adipose tissue and in aorta. Undetectable in other tissues. Isoform 2 and isoform 3 are poorly detected in heart.

The protein localises to the cytoplasm. It is found in the nucleus. Its subcellular location is the cajal body. This Homo sapiens (Human) protein is Heat shock protein beta-7 (HSPB7).